A 166-amino-acid polypeptide reads, in one-letter code: Deglycase PYRAB04690 (166 aa).

The 166-residue stretch at Met1–Lys166 folds into the PfpI endopeptidase domain. His101 is an active-site residue.

This sequence belongs to the peptidase C56 family. As to quaternary structure, homohexamer formed by a dimer of trimers that assemble into a hollow ring structure.

It localises to the cytoplasm. It catalyses the reaction N(omega)-(1-hydroxy-2-oxopropyl)-L-arginyl-[protein] + H2O = lactate + L-arginyl-[protein] + H(+). The enzyme catalyses N(6)-(1-hydroxy-2-oxopropyl)-L-lysyl-[protein] + H2O = lactate + L-lysyl-[protein] + H(+). The catalysed reaction is S-(1-hydroxy-2-oxopropyl)-L-cysteinyl-[protein] + H2O = lactate + L-cysteinyl-[protein] + H(+). It carries out the reaction N(omega)-(1-hydroxy-2-oxoethyl)-L-arginyl-[protein] + H2O = L-arginyl-[protein] + glycolate + H(+). It catalyses the reaction N(6)-(1-hydroxy-2-oxoethyl)-L-lysyl-[protein] + H2O = glycolate + L-lysyl-[protein] + H(+). The enzyme catalyses S-(1-hydroxy-2-oxoethyl)-L-cysteinyl-[protein] + H2O = glycolate + L-cysteinyl-[protein] + H(+). Functionally, deglycase that catalyzes the deglycation of the Maillard adducts formed between amino groups of proteins and reactive carbonyl groups of glyoxals. Thus, functions as a protein deglycase that repairs methylglyoxal- and glyoxal-glycated proteins, and releases repaired proteins and lactate or glycolate, respectively. Deglycates cysteine, arginine and lysine residues in proteins, and thus reactivates these proteins by reversing glycation by glyoxals. Acts on early glycation intermediates (hemithioacetals and aminocarbinols), preventing the formation of advanced glycation endproducts (AGE) that cause irreversible damage. Also displays proteolytic activity. The sequence is that of Deglycase PYRAB04690 from Pyrococcus abyssi (strain GE5 / Orsay).